We begin with the raw amino-acid sequence, 169 residues long: S-ribosylhomocysteine lyase (169 aa).

Fe cation-binding residues include H54, H58, and C128.

This sequence belongs to the LuxS family. Homodimer. Fe cation is required as a cofactor.

It carries out the reaction S-(5-deoxy-D-ribos-5-yl)-L-homocysteine = (S)-4,5-dihydroxypentane-2,3-dione + L-homocysteine. Functionally, involved in the synthesis of autoinducer 2 (AI-2) which is secreted by bacteria and is used to communicate both the cell density and the metabolic potential of the environment. The regulation of gene expression in response to changes in cell density is called quorum sensing. Catalyzes the transformation of S-ribosylhomocysteine (RHC) to homocysteine (HC) and 4,5-dihydroxy-2,3-pentadione (DPD). The chain is S-ribosylhomocysteine lyase from Shewanella baltica (strain OS223).